The primary structure comprises 88 residues: Molybdopterin synthase sulfur carrier subunit (88 aa).

Residue glycine 88 is modified to 1-thioglycine; alternate. Glycine 88 is modified (glycyl adenylate; alternate).

It belongs to the MoaD family. MOCS2A subfamily. Heterotetramer; composed of 2 small (MOCS2A) and 2 large (MOCS2B) subunits. Post-translationally, C-terminal thiocarboxylation occurs in 2 steps, it is first acyl-adenylated (-COAMP) via the hesA/moeB/thiF part of MOCS3, then thiocarboxylated (-COSH) via the rhodanese domain of MOCS3.

Its subcellular location is the cytoplasm. It localises to the cytosol. The protein operates within cofactor biosynthesis; molybdopterin biosynthesis. In terms of biological role, acts as a sulfur carrier required for molybdopterin biosynthesis. Component of the molybdopterin synthase complex that catalyzes the conversion of precursor Z into molybdopterin by mediating the incorporation of 2 sulfur atoms into precursor Z to generate a dithiolene group. In the complex, serves as sulfur donor by being thiocarboxylated (-COSH) at its C-terminus by MOCS3. After interaction with MOCS2B, the sulfur is then transferred to precursor Z to form molybdopterin. This Mus musculus (Mouse) protein is Molybdopterin synthase sulfur carrier subunit.